The following is a 381-amino-acid chain: Homoserine O-succinyltransferase (381 aa).

One can recognise an AB hydrolase-1 domain in the interval 45–360; sequence NAVLVCHALN…PHGHDAFLLD (316 aa). The active-site Nucleophile is S151. Residue R221 coordinates substrate. Residues D321 and H354 contribute to the active site. D355 serves as a coordination point for substrate.

Belongs to the AB hydrolase superfamily. MetX family. Homodimer.

It is found in the cytoplasm. It catalyses the reaction L-homoserine + succinyl-CoA = O-succinyl-L-homoserine + CoA. It functions in the pathway amino-acid biosynthesis; L-methionine biosynthesis via de novo pathway; O-succinyl-L-homoserine from L-homoserine: step 1/1. Its function is as follows. Transfers a succinyl group from succinyl-CoA to L-homoserine, forming succinyl-L-homoserine. The sequence is that of Homoserine O-succinyltransferase from Burkholderia cenocepacia (strain ATCC BAA-245 / DSM 16553 / LMG 16656 / NCTC 13227 / J2315 / CF5610) (Burkholderia cepacia (strain J2315)).